The sequence spans 174 residues: Chromophore lyase CpcS/CpeS 1 (174 aa).

Belongs to the CpcS/CpeS biliprotein lyase family.

In terms of biological role, covalently attaches a chromophore to Cys residue(s) of phycobiliproteins. In Trichodesmium erythraeum (strain IMS101), this protein is Chromophore lyase CpcS/CpeS 1.